The primary structure comprises 757 residues: Xaa-Pro dipeptidyl-peptidase (757 aa).

Active-site charge relay system residues include serine 348, aspartate 468, and histidine 498.

The protein belongs to the peptidase S15 family. As to quaternary structure, homodimer.

Its subcellular location is the cytoplasm. The catalysed reaction is Hydrolyzes Xaa-Pro-|- bonds to release unblocked, N-terminal dipeptides from substrates including Ala-Pro-|-p-nitroanilide and (sequentially) Tyr-Pro-|-Phe-Pro-|-Gly-Pro-|-Ile.. Its function is as follows. Removes N-terminal dipeptides sequentially from polypeptides having unsubstituted N-termini provided that the penultimate residue is proline. This Streptococcus pneumoniae serotype 19F (strain G54) protein is Xaa-Pro dipeptidyl-peptidase.